A 541-amino-acid polypeptide reads, in one-letter code: Chaperonin GroEL 2 (541 aa).

Residues 30–33 (TLGP), Lys-51, 87–91 (DGTTT), Gly-415, and Asp-496 each bind ATP.

It belongs to the chaperonin (HSP60) family. Forms a cylinder of 14 subunits composed of two heptameric rings stacked back-to-back. Interacts with the co-chaperonin GroES.

Its subcellular location is the cytoplasm. It catalyses the reaction ATP + H2O + a folded polypeptide = ADP + phosphate + an unfolded polypeptide.. Together with its co-chaperonin GroES, plays an essential role in assisting protein folding. The GroEL-GroES system forms a nano-cage that allows encapsulation of the non-native substrate proteins and provides a physical environment optimized to promote and accelerate protein folding. This is Chaperonin GroEL 2 from Bradyrhizobium sp. (strain BTAi1 / ATCC BAA-1182).